The following is an 842-amino-acid chain: MPLSYQHFRRILLLDEEAGPLEEELPRLADEDLNRRVAEDLNLQLPNVSIPWTHKVGNFTGLYSSTIPVFNPNWKTPSFPDIHLHQDIINKCEQFVGPLTVNEKRRLNLVMPARFFPISTKYLPLEKGIKPYYPDNVVNHYFQTRHYLHTLWKAGILYKRETTRSASFCGSPYSWEQELHHGAFLDGPSRMGEESFHHQSSGIFSRPPVGSSIQSKHQKSRLGPQSQQRPLDGSQQGRSGSIRAGVHSPTRRPFGVEPSGSRHAKNIASRSASCLHQSAVRKAAYPNHSTFERHSSSGHAVEFHNISPSSAGSQSKRPVFSCWWLQFRNSEPCSDYCLTHLVNLLEDWGPCTEHGKHHIRIPRTPARITGGVFLVDKNPHNTAESRLVVDFSQFSRGSSRVSWPKFAVPNLQSLTNLLSSNLSWLSLDVSAAFYHLPLHPAAMPHLLVGSSGLSRYVARLSSNSRIINHQYGTLPNLHDSCSRNLYVSLMLLFKTFGRKLHLYSHPIIMGFRKIPMGVGLSPFLLAQFTSAICSVVRRAFPHCLAFSYMDDVVLGAKSVQHLESLYTSVTNFLLSLGIHLNPNKTKRWGYSLNFMGYVIGSWGSLPQEHIIMKIKDCFRKLPVNRPIDWKVCQRIVGLLGFAAPFTQCGYPALMPLYACIQSKQAFTFSPTYKAFLCKQYLNLYPVARQRPGLCQVFADATPTGWGLAIGHQRMRGTFMAPLPIHTAELLAACFARSRSGAKLIGTDNSVVLSRKYTSFPWLLGCAANWILRGTSFVYVPSALNPADDPSRGRLGIYRPLLRLPFQPSTGRTSLYAVSPSVPSHLPDRVHFASPLHVAWRPP.

The terminal protein domain (TP) stretch occupies residues 1–177; it reads MPLSYQHFRR…FCGSPYSWEQ (177 aa). A spacer region spans residues 178–345; sequence ELHHGAFLDG…YCLTHLVNLL (168 aa). The disordered stretch occupies residues 186-273; the sequence is DGPSRMGEES…AKNIASRSAS (88 aa). Over residues 223 to 239 the composition is skewed to polar residues; the sequence is GPQSQQRPLDGSQQGRS. The interval 346–689 is polymerase/reverse transcriptase domain (RT); it reads EDWGPCTEHG…YLNLYPVARQ (344 aa). The Reverse transcriptase domain maps to 356-599; the sequence is KHHIRIPRTP…YSLNFMGYVI (244 aa). Mg(2+) is bound by residues D428, D550, and D551.

The protein belongs to the hepadnaviridae P protein family.

It carries out the reaction DNA(n) + a 2'-deoxyribonucleoside 5'-triphosphate = DNA(n+1) + diphosphate. The enzyme catalyses Endonucleolytic cleavage to 5'-phosphomonoester.. With respect to regulation, activated by host HSP70 and HSP40 in vitro to be able to bind the epsilon loop of the pgRNA. Because deletion of the RNase H region renders the protein partly chaperone-independent, the chaperones may be needed indirectly to relieve occlusion of the RNA-binding site by this domain. Inhibited by several reverse-transcriptase inhibitors: Lamivudine, Adefovir and Entecavir. Its function is as follows. Multifunctional enzyme that converts the viral RNA genome into dsDNA in viral cytoplasmic capsids. This enzyme displays a DNA polymerase activity that can copy either DNA or RNA templates, and a ribonuclease H (RNase H) activity that cleaves the RNA strand of RNA-DNA heteroduplexes in a partially processive 3'- to 5'-endonucleasic mode. Neo-synthesized pregenomic RNA (pgRNA) are encapsidated together with the P protein, and reverse-transcribed inside the nucleocapsid. Initiation of reverse-transcription occurs first by binding the epsilon loop on the pgRNA genome, and is initiated by protein priming, thereby the 5'-end of (-)DNA is covalently linked to P protein. Partial (+)DNA is synthesized from the (-)DNA template and generates the relaxed circular DNA (RC-DNA) genome. After budding and infection, the RC-DNA migrates in the nucleus, and is converted into a plasmid-like covalently closed circular DNA (cccDNA). The activity of P protein does not seem to be necessary for cccDNA generation, and is presumably released from (+)DNA by host nuclear DNA repair machinery. The polypeptide is Protein P (Homo sapiens (Human)).